The primary structure comprises 633 residues: Pentatricopeptide repeat-containing protein At1g43980, mitochondrial (633 aa).

The transit peptide at 1–30 (MFQLLRRAHGLCMPSSLYFSRLVNRSLLSK) directs the protein to the mitochondrion. PPR repeat units lie at residues 50–80 (TTYW…IPDK), 81–111 (NTIT…MPER), 112–146 (DVVS…EIRP), 147–178 (TEFT…GVSR), 180–210 (NLVV…MEDR), 211–245 (DVVS…EIQP), 246–280 (DEYT…GFLS), 281–311 (NSIV…LEKW), 312–346 (DSVL…SVRP), 347–380 (DKFT…GFDL), 381–411 (DTAV…TDGK), 412–447 (DLIF…SLKP), 448–483 (DRVT…GVNP), and 484–514 (GNEH…IPFE). The interval 519-594 (IWEPILCASL…AQGSSKISIE (76 aa)) is type E motif.

It belongs to the PPR family. PCMP-E subfamily.

The protein localises to the mitochondrion. This chain is Pentatricopeptide repeat-containing protein At1g43980, mitochondrial (PCMP-E58), found in Arabidopsis thaliana (Mouse-ear cress).